The primary structure comprises 364 residues: Coproporphyrin III ferrochelatase (364 aa).

Fe-coproporphyrin III contacts are provided by Arg-29 and Tyr-118. Positions 169 and 250 each coordinate Fe(2+).

The protein belongs to the ferrochelatase family.

It localises to the cytoplasm. It carries out the reaction Fe-coproporphyrin III + 2 H(+) = coproporphyrin III + Fe(2+). The protein operates within porphyrin-containing compound metabolism; protoheme biosynthesis. Functionally, involved in coproporphyrin-dependent heme b biosynthesis. Catalyzes the insertion of ferrous iron into coproporphyrin III to form Fe-coproporphyrin III. The polypeptide is Coproporphyrin III ferrochelatase (Streptococcus pneumoniae (strain 70585)).